The sequence spans 73 residues: Beta-defensin 50 (73 aa).

The N-terminal stretch at methionine 1–serine 23 is a signal peptide. Disulfide bonds link cysteine 34–cysteine 63 and cysteine 46–cysteine 64.

It belongs to the beta-defensin family.

The protein resides in the secreted. In terms of biological role, has bactericidal activity. This chain is Beta-defensin 50 (Defb50), found in Rattus norvegicus (Rat).